Consider the following 464-residue polypeptide: Cysteine--tRNA ligase (464 aa).

C28 is a binding site for Zn(2+). Residues 30–40 (PTVYDHSHIGH) carry the 'HIGH' region motif. Zn(2+) is bound by residues C205, H230, and E234. Positions 263 to 267 (KMSKS) match the 'KMSKS' region motif. K266 contributes to the ATP binding site.

Belongs to the class-I aminoacyl-tRNA synthetase family. Requires Zn(2+) as cofactor.

It localises to the cytoplasm. It carries out the reaction tRNA(Cys) + L-cysteine + ATP = L-cysteinyl-tRNA(Cys) + AMP + diphosphate. This Ignicoccus hospitalis (strain KIN4/I / DSM 18386 / JCM 14125) protein is Cysteine--tRNA ligase.